Reading from the N-terminus, the 97-residue chain is Co-chaperonin GroES (97 aa).

Belongs to the GroES chaperonin family. In terms of assembly, heptamer of 7 subunits arranged in a ring. Interacts with the chaperonin GroEL.

It is found in the cytoplasm. Functionally, together with the chaperonin GroEL, plays an essential role in assisting protein folding. The GroEL-GroES system forms a nano-cage that allows encapsulation of the non-native substrate proteins and provides a physical environment optimized to promote and accelerate protein folding. GroES binds to the apical surface of the GroEL ring, thereby capping the opening of the GroEL channel. The chain is Co-chaperonin GroES from Salmonella agona (strain SL483).